Reading from the N-terminus, the 616-residue chain is DNA mismatch repair protein MutL (616 aa).

Belongs to the DNA mismatch repair MutL/HexB family.

This protein is involved in the repair of mismatches in DNA. It is required for dam-dependent methyl-directed DNA mismatch repair. May act as a 'molecular matchmaker', a protein that promotes the formation of a stable complex between two or more DNA-binding proteins in an ATP-dependent manner without itself being part of a final effector complex. In Syntrophus aciditrophicus (strain SB), this protein is DNA mismatch repair protein MutL.